A 584-amino-acid polypeptide reads, in one-letter code: AAA ATPase forming ring-shaped complexes (584 aa).

Residues 10-96 are a coiled coil; that stretch reads AQSGTEHAEQ…LKENLDAVTH (87 aa). Residues 40–66 are disordered; the sequence is HQLQSAQRHAAGLSERRRAAEAQTQTA. 292-297 is a binding site for ATP; sequence GTGKTM.

The protein belongs to the AAA ATPase family. In terms of assembly, homohexamer. Assembles into a hexameric ring structure.

The sequence is that of AAA ATPase forming ring-shaped complexes from Micrococcus luteus (strain ATCC 4698 / DSM 20030 / JCM 1464 / CCM 169 / CCUG 5858 / IAM 1056 / NBRC 3333 / NCIMB 9278 / NCTC 2665 / VKM Ac-2230) (Micrococcus lysodeikticus).